An 887-amino-acid chain; its full sequence is Amyloid-beta-like protein (887 aa).

A signal peptide spans 1–27; the sequence is MCAALRRNLLLRSLWVVLAIGTAQVQA. Topologically, residues 28 to 813 are extracellular; the sequence is ASPRWEPQIA…HAAKEGRNVY (786 aa). The GFLD subdomain stretch occupies residues 30–133; that stretch reads PRWEPQIAVL…KPFRCLGPFQ (104 aa). The region spanning 30 to 199 is the E1 domain; that stretch reads PRWEPQIAVL…SGVEFVCCPK (170 aa). Cystine bridges form between C40–C70, C81–C128, C106–C116, C143–C197, C154–C184, and C168–C196. Residues 141 to 199 form a cuBD subdomain region; sequence EGCLFDHIHNASRCWPFVRWNQTGAAACQERGMQMRSFAMLLPCGISVFSGVEFVCCPK. N150 and N161 each carry an N-linked (GlcNAc...) asparagine glycan. Disordered stretches follow at residues 225–365 and 377–396; these read NDEL…STPQ and NSGN…QPTS. N-linked (GlcNAc...) asparagine glycans are attached at residues N237 and N240. A compositionally biased stretch (acidic residues) spans 246 to 267; sequence NEDDLDDEDDLMGDDEEDDMVA. Residues 268 to 292 show a composition bias toward low complexity; it reads DEAATAGGSPNTGSSGDSNSGSLDD. Residues 293 to 321 show a composition bias toward acidic residues; it reads INAEYDSGEEGDNYEEDGAGSESEAEVEA. The span at 329–352 shows a compositional bias: low complexity; the sequence is AKVVSLKSDSSSPSSAPVAPAPEK. Residues 395–597 form the E2 domain; that stretch reads TSDPYFTHFD…AKIAQLMNDY (203 aa). A glycan (N-linked (GlcNAc...) asparagine) is linked at N574. A disordered region spans residues 675–743; the sequence is KSQVAEQQSQ…TEYGEATVSS (69 aa). Over residues 681-699 the composition is skewed to low complexity; that stretch reads QQSQPTQSSTQSQAQQQQQ. A helical transmembrane segment spans residues 814-834; it reads FTLSFAGIALMAAVFVGVAVA. At 835–887 the chain is on the cytoplasmic side; that stretch reads KWRTSRSPHAQGFIEVDQNVTTHHPIVREEKIVPNMQINGYENPTYKYFEVKE. The YENPXY motif motif lies at 875-880; it reads YENPTY.

This sequence belongs to the APP family. As to quaternary structure, interacts (via the intracellular domain, ICD) with APP-BP1. In terms of tissue distribution, expressed in postmitotic neurons in the central and peripheral nervous systems. Within the nervous system, transcripts are not observed in neuroblasts, newly generated neurons and at least one class of presumed glial cells.

Its subcellular location is the membrane. Functionally, during development, plays a role in the regulation of the neddylation pathway. Appl and APP-BP1 interact antagonistically during development. In Drosophila melanogaster (Fruit fly), this protein is Amyloid-beta-like protein (Appl).